The chain runs to 64 residues: Large ribosomal subunit protein bL35 (64 aa).

This sequence belongs to the bacterial ribosomal protein bL35 family.

This Aliivibrio fischeri (strain ATCC 700601 / ES114) (Vibrio fischeri) protein is Large ribosomal subunit protein bL35.